We begin with the raw amino-acid sequence, 189 residues long: Probable DNA-directed RNA polymerase subunit delta (189 aa).

The HTH HARE-type domain maps to 14–81 (LSMIEVAHAI…GENVWALRTW (68 aa)). 2 stretches are compositionally biased toward acidic residues: residues 90 to 100 (EVDHPEDDGDE) and 118 to 189 (EGDD…EDEE). The disordered stretch occupies residues 90–189 (EVDHPEDDGD…DDLDDDEDEE (100 aa)).

Belongs to the RpoE family. RNAP is composed of a core of 2 alpha, a beta and a beta' subunits. The core is associated with a delta subunit and one of several sigma factors.

Its function is as follows. Participates in both the initiation and recycling phases of transcription. In the presence of the delta subunit, RNAP displays an increased specificity of transcription, a decreased affinity for nucleic acids, and an increased efficiency of RNA synthesis because of enhanced recycling. The protein is Probable DNA-directed RNA polymerase subunit delta of Lactobacillus delbrueckii subsp. bulgaricus (strain ATCC 11842 / DSM 20081 / BCRC 10696 / JCM 1002 / NBRC 13953 / NCIMB 11778 / NCTC 12712 / WDCM 00102 / Lb 14).